Here is a 266-residue protein sequence, read N- to C-terminus: MSKVLKNALAGYGYNLVALPKEGIAPLLLLYKNKRDVSSSGNNIDKLFALADSPPPIVSKNNATLNLQQNSTVSFDGKAGVDILDWLLQKLKMGKLRGNINADHINSLQISYQNVFEDNVSLLQLDNFISGSEPKVDQFNTFKEKLKDNELFVINSVLKSNSFSVSAQNKNGQNIDLEATIKGIVDADVNVGRSKKDEVLMEYKNATPIVFAFKAQKIIYDHKKWWQFFKKGDAKFRIKDEHGVVLKDESGFPTQSLEETNELINI.

4 beta stranded membrane passes run 67 to 83 (LQQN…GVDI), 95 to 113 (KLRG…ISYQ), 162 to 179 (SFSV…DLEA), and 187 to 203 (ADVN…LMEY).

This sequence belongs to the bacterial gasdermin family. As to quaternary structure, monomer. In terms of assembly, forms large, homooligomeric ring-shaped pores when inserted in membranes.

The protein resides in the cytoplasm. Its subcellular location is the cell inner membrane. The full-length protein before cleavage is inactive: intramolecular interactions between the N-terminal domain and the C-terminal region mediate autoinhibition. The pyroptosis-like-inducing activity is carried by the released N-terminal domain (Gasdermin bGSDM, N-terminus). Its function is as follows. Precursor of a pore-forming protein involved in defense against bacteriophages. Expression of bGSDM and the neighboring protease gene (Gilli_2517) is not toxic in E.coli. Cleavage of this precursor by its dedicated protease releases the active moiety (gasdermin bGSDM, N-terminus) which inserts into membranes, forming pores and triggering cell death. Pore-forming protein that causes membrane permeabilization via a pyroptosis-like activity. Makes ring-like pores when released. This is Gasdermin bGSDM from Gillisia limnaea (strain DSM 15749 / LMG 21470 / R-8282).